Here is a 528-residue protein sequence, read N- to C-terminus: Protein arginine N-methyltransferase 3 (528 aa).

The disordered stretch occupies residues 1 to 42 (MCSLAAGNGQGAELGPEPLELSDSGDDAGWEDEDADAEPAQG). Residue Cys-2 is modified to N-acetylcysteine. Residues Ser-22 and Ser-24 each carry the phosphoserine modification. The span at 23-37 (DSGDDAGWEDEDADA) shows a compositional bias: acidic residues. Residues 46–69 (TPCLFCDRLFRSAEETFSHCKLEH) form a C2H2-type zinc finger. Phosphoserine is present on Ser-169. The interval 184–528 (MKQFAQDFVM…NSSTQTYSLQ (345 aa)) is mediates interaction with ALDH1A1. One can recognise an SAM-dependent MTase PRMT-type domain in the interval 214-528 (DGVYFSSYGH…NSSTQTYSLQ (315 aa)). S-adenosyl-L-homocysteine contacts are provided by Arg-236, Gly-260, Asp-282, Ser-284, Ile-310, and Glu-311. Catalysis depends on residues Glu-326 and Glu-335.

Belongs to the class I-like SAM-binding methyltransferase superfamily. Protein arginine N-methyltransferase family. Monomer and homodimer. Interacts with EPB41L3 (via FERM domain); the interaction is direct and inhibits the protein-arginine N-methyltransferase activity of PRMT3. Interacts with the 40S ribosomal protein RPS2. Interacts with ALDH1A1; the interaction is direct, inhibits ALDH1A1 aldehyde dehydrogenase activity and is independent of the methyltransferase activity of PRMT3. In terms of tissue distribution, ubiquitously expressed.

Its subcellular location is the cytoplasm. It localises to the cytosol. It is found in the nucleus. The enzyme catalyses L-arginyl-[protein] + S-adenosyl-L-methionine = N(omega)-methyl-L-arginyl-[protein] + S-adenosyl-L-homocysteine + H(+). It carries out the reaction L-arginyl-[protein] + 2 S-adenosyl-L-methionine = N(omega),N(omega)-dimethyl-L-arginyl-[protein] + 2 S-adenosyl-L-homocysteine + 2 H(+). Its activity is regulated as follows. Inhibited by N-ethylmaleimide and high concentrations of zinc chloride. Functionally, protein-arginine N-methyltransferase that catalyzes both the monomethylation and asymmetric dimethylation of the guanidino nitrogens of arginine residues in target proteins, and therefore falls into the group of type I methyltransferases. Catalyzes the asymmetric arginine dimethylation at multiple sites in the Arg/Gly-rich region of small ribosomal subunit protein uS5/RPS2. Also appears to methylate other ribosomal proteins. May regulate retinoic acid synthesis and signaling by inhibiting ALDH1A1 retinal dehydrogenase activity. Contributes to methylation of histone H4 'Arg-3', a specific tag for epigenetic transcriptional activation. Promotes osteogenesis. The polypeptide is Protein arginine N-methyltransferase 3 (Rattus norvegicus (Rat)).